Reading from the N-terminus, the 127-residue chain is Histone H2A (127 aa).

Residues 1–20 (MSGRGKGGKAKTGGKAKSRS) show a composition bias toward basic residues. Residues 1 to 23 (MSGRGKGGKAKTGGKAKSRSSRA) are disordered. The residue at position 2 (S2) is an N-acetylserine. S2 is modified (phosphoserine). An N6-acetyllysine; partial mark is found at K6, K9, and K11. Q106 is subject to N5-methylglutamine. A Glycyl lysine isopeptide (Lys-Gly) (interchain with G-Cter in ubiquitin) cross-link involves residue K121.

The protein belongs to the histone H2A family. In terms of assembly, the nucleosome is a histone octamer containing two molecules each of H2A, H2B, H3 and H4 assembled in one H3-H4 heterotetramer and two H2A-H2B heterodimers. The octamer wraps approximately 147 bp of DNA. In terms of processing, monoubiquitination of Lys-121 gives a specific tag for epigenetic transcriptional repression. Phosphorylation on Ser-2 is enhanced during mitosis. Phosphorylation on Ser-2 directly represses transcription.

The protein localises to the nucleus. The protein resides in the chromosome. In terms of biological role, core component of nucleosome. Nucleosomes wrap and compact DNA into chromatin, limiting DNA accessibility to the cellular machineries which require DNA as a template. Histones thereby play a central role in transcription regulation, DNA repair, DNA replication and chromosomal stability. DNA accessibility is regulated via a complex set of post-translational modifications of histones, also called histone code, and nucleosome remodeling. This chain is Histone H2A (his-3), found in Caenorhabditis elegans.